A 1108-amino-acid polypeptide reads, in one-letter code: Retinal guanylyl cyclase 1 (1108 aa).

The N-terminal stretch at Met1 to Ser54 is a signal peptide. Over Ala55–Glu465 the chain is Extracellular. A disulfide bond links Cys108 and Cys136. N-linked (GlcNAc...) asparagine glycosylation occurs at Asn300. The chain crosses the membrane as a helical span at residues Pro466–Leu490. The Cytoplasmic portion of the chain corresponds to Arg491–Lys1108. Positions Gly520–Ser552 are disordered. Residues Gly520–Ile811 enclose the Protein kinase domain. Polar residues predominate over residues Gly529–Ser552. The Guanylate cyclase domain maps to Thr883–Glu1013. The interval Ile1069 to Lys1108 is disordered.

This sequence belongs to the adenylyl cyclase class-4/guanylyl cyclase family. In terms of assembly, homodimer; requires homodimerization for guanylyl cyclase activity. Interacts (via C-terminus) with RD3 (via C-terminus); promotes the exit of GUCY2E from the endoplasmic reticulum and its trafficking to the photoreceptor outer segments. Interaction with RD3 negatively regulates GUCY2E guanylate cyclase activity. Post-translationally, there are 9 conserved cysteine residues in sensory guanylate cyclases, 6 in the extracellular domain, which may be involved in intra- or interchain disulfide bonds. As to expression, expressed in retina and enriched in photoreceptor outer segments.

It is found in the membrane. The protein localises to the photoreceptor outer segment membrane. The protein resides in the endoplasmic reticulum membrane. It catalyses the reaction GTP = 3',5'-cyclic GMP + diphosphate. With respect to regulation, activated by GUCA1A when free calcium ions concentration is low, and inhibited by GUCA1A when free calcium ions concentration is high. Negatively regulated by RD3; inhibits the basal and GUCA1A-stimulated guanylate cyclase activity. Catalyzes the synthesis of cyclic GMP (cGMP) in rods and cones of photoreceptors. Plays an essential role in phototransduction, by mediating cGMP replenishment. May also participate in the trafficking of membrane-asociated proteins to the photoreceptor outer segment membrane. The polypeptide is Retinal guanylyl cyclase 1 (Gucy2e) (Rattus norvegicus (Rat)).